A 473-amino-acid polypeptide reads, in one-letter code: Adenosylhomocysteinase (473 aa).

Positions 64, 139, and 199 each coordinate substrate. 200-202 contributes to the NAD(+) binding site; it reads TTT. The substrate site is built by lysine 229 and aspartate 233. Residues asparagine 234, 263–268, glutamate 286, asparagine 321, 342–344, and asparagine 387 each bind NAD(+); these read GYGDVG and IGH.

This sequence belongs to the adenosylhomocysteinase family. NAD(+) serves as cofactor.

Its subcellular location is the cytoplasm. The catalysed reaction is S-adenosyl-L-homocysteine + H2O = L-homocysteine + adenosine. The protein operates within amino-acid biosynthesis; L-homocysteine biosynthesis; L-homocysteine from S-adenosyl-L-homocysteine: step 1/1. Its function is as follows. May play a key role in the regulation of the intracellular concentration of adenosylhomocysteine. The sequence is that of Adenosylhomocysteinase from Paraburkholderia phymatum (strain DSM 17167 / CIP 108236 / LMG 21445 / STM815) (Burkholderia phymatum).